The sequence spans 409 residues: uncharacterized protein (409 aa).

The next 12 membrane-spanning stretches (helical) occupy residues 3–23, 43–63, 73–93, 95–115, 135–155, 162–182, 209–229, 248–268, 283–303, 309–329, 346–366, and 379–399; these read IIVK…PTTE, ITQI…LSLG, PIVL…IFSV, IEML…GSVI, ILSP…GYII, YVFV…YKIL, ILWL…GFFI, KLAF…GYLI, FIFS…LEFI, LAIS…SLLI, TAGS…TYCV, and LLCL…CILY.

This sequence belongs to the major facilitator superfamily. Bcr/CmlA family.

The protein resides in the cell inner membrane. This is an uncharacterized protein from Rickettsia typhi (strain ATCC VR-144 / Wilmington).